Here is a 255-residue protein sequence, read N- to C-terminus: 4-hydroxy-tetrahydrodipicolinate reductase (255 aa).

Residues 9-14 (GFKGKM), 89-91 (GTT), and 115-118 (APNF) contribute to the NAD(+) site. The Proton donor/acceptor role is filled by histidine 145. Histidine 146 contributes to the (S)-2,3,4,5-tetrahydrodipicolinate binding site. Lysine 149 serves as the catalytic Proton donor. (S)-2,3,4,5-tetrahydrodipicolinate is bound at residue 155-156 (GT).

This sequence belongs to the DapB family.

The protein resides in the cytoplasm. It carries out the reaction (S)-2,3,4,5-tetrahydrodipicolinate + NAD(+) + H2O = (2S,4S)-4-hydroxy-2,3,4,5-tetrahydrodipicolinate + NADH + H(+). The catalysed reaction is (S)-2,3,4,5-tetrahydrodipicolinate + NADP(+) + H2O = (2S,4S)-4-hydroxy-2,3,4,5-tetrahydrodipicolinate + NADPH + H(+). It participates in amino-acid biosynthesis; L-lysine biosynthesis via DAP pathway; (S)-tetrahydrodipicolinate from L-aspartate: step 4/4. In terms of biological role, catalyzes the conversion of 4-hydroxy-tetrahydrodipicolinate (HTPA) to tetrahydrodipicolinate. This chain is 4-hydroxy-tetrahydrodipicolinate reductase, found in Streptococcus sanguinis (strain SK36).